Reading from the N-terminus, the 396-residue chain is S-adenosylmethionine synthase (396 aa).

Histidine 16 is an ATP binding site. Aspartate 18 contacts Mg(2+). Glutamate 44 is a binding site for K(+). L-methionine contacts are provided by glutamate 57 and glutamine 100. The flexible loop stretch occupies residues 100–110 (QSPDINQGVDR). Residues 165-167 (DAK), aspartate 240, 246-247 (RK), alanine 263, and lysine 267 contribute to the ATP site. Residue aspartate 240 coordinates L-methionine. Lysine 271 contributes to the L-methionine binding site.

Belongs to the AdoMet synthase family. In terms of assembly, homotetramer; dimer of dimers. It depends on Mg(2+) as a cofactor. Requires K(+) as cofactor.

It localises to the cytoplasm. It carries out the reaction L-methionine + ATP + H2O = S-adenosyl-L-methionine + phosphate + diphosphate. It participates in amino-acid biosynthesis; S-adenosyl-L-methionine biosynthesis; S-adenosyl-L-methionine from L-methionine: step 1/1. Catalyzes the formation of S-adenosylmethionine (AdoMet) from methionine and ATP. The overall synthetic reaction is composed of two sequential steps, AdoMet formation and the subsequent tripolyphosphate hydrolysis which occurs prior to release of AdoMet from the enzyme. The protein is S-adenosylmethionine synthase of Pseudomonas fluorescens (strain SBW25).